We begin with the raw amino-acid sequence, 141 residues long: Large ribosomal subunit protein uL11 (141 aa).

This sequence belongs to the universal ribosomal protein uL11 family. Part of the ribosomal stalk of the 50S ribosomal subunit. Interacts with L10 and the large rRNA to form the base of the stalk. L10 forms an elongated spine to which L12 dimers bind in a sequential fashion forming a multimeric L10(L12)X complex. Post-translationally, one or more lysine residues are methylated.

Functionally, forms part of the ribosomal stalk which helps the ribosome interact with GTP-bound translation factors. The sequence is that of Large ribosomal subunit protein uL11 from Chlorobium phaeobacteroides (strain DSM 266 / SMG 266 / 2430).